A 1162-amino-acid polypeptide reads, in one-letter code: Spike glycoprotein (1162 aa).

A signal peptide spans 1-18 (MLVTPLLLVTLLCALCSA). The Extracellular portion of the chain corresponds to 19 to 1095 (ALYDSSSYVY…LKTYIKWPWY (1077 aa)). N-linked (GlcNAc...) asparagine; by host glycans are attached at residues Asn51, Asn77, Asn103, Asn144, Asn163, Asn178, Asn212, Asn237, Asn247, Asn264, Asn271, Asn276, Asn306, Asn425, Asn447, Asn513, Asn530, Asn579, Asn591, Asn669, Asn676, and Asn714. The segment at 769–874 (IPFATQLQAR…QVDRLITGRL (106 aa)) is heptad repeat 1 (HR1). Positions 822–866 (QDVVNKQSAILTETMASLNKNFGAISSVIQEIYLQLDAIQANAQV) form a coiled coil. N-linked (GlcNAc...) asparagine; by host glycans are attached at residues Asn947, Asn960, Asn979, Asn1014, Asn1051, Asn1058, and Asn1074. The segment at 1024–1105 (NDDFDFDDEL…VWLAIAFATI (82 aa)) is heptad repeat 2 (HR2). The stretch at 1055–1083 (PVLNITYDIDKIEEVIKGLNDSLIDLETL) forms a coiled coil. A helical membrane pass occupies residues 1096–1116 (VWLAIAFATIIFILILGWVFF). The Cytoplasmic portion of the chain corresponds to 1117-1162 (MTGCCGCCCGCFGIIPLMSKCGKKSSYYTTFDNDVVTEQYRPKKSV). Residues 1159–1162 (KKSV) carry the Di-lysine motif motif.

Belongs to the gammacoronaviruses spike protein family. As to quaternary structure, homotrimer; each monomer consists of a S1 and a S2 subunit. The resulting peplomers protrude from the virus surface as spikes. Specific enzymatic cleavages in vivo yield mature proteins. The precursor is processed into S1 and S2 by host cell furin or furin-like protease to yield the mature S1 and S2 proteins. The cleavage site between S1 and S2 requires the optimal sequence [KR]-X-[KR]-R. Additionally, a second cleavage leads to the release of a fusion peptide after viral attachment to host cell receptor.

The protein localises to the virion membrane. Its subcellular location is the host endoplasmic reticulum-Golgi intermediate compartment membrane. In terms of biological role, attaches the virion to the host cell membrane by interacting with sialic acids, initiating the infection. Functionally, mediates fusion of the virion and cellular membranes by acting as a class I viral fusion protein. Under the current model, the protein has at least 3 conformational states: pre-fusion native state, pre-hairpin intermediate state, and post-fusion hairpin state. During viral and target cell membrane fusion, the coiled coil regions (heptad repeats) assume a trimer-of-hairpins structure, positioning the fusion peptide in close proximity to the C-terminal region of the ectodomain. The formation of this structure appears to drive apposition and subsequent fusion of viral and target cell membranes. Its function is as follows. Acts as a viral fusion peptide after S2 cleavage occurring upon virus endocytosis. This Avian infectious bronchitis virus (strain KB8523) (IBV) protein is Spike glycoprotein.